The primary structure comprises 90 residues: Acylphosphatase (90 aa).

Residues 3–90 (QYHMIADGRV…KGYRTFSISY (88 aa)) form the Acylphosphatase-like domain. Residues R18 and N36 contribute to the active site.

This sequence belongs to the acylphosphatase family.

The enzyme catalyses an acyl phosphate + H2O = a carboxylate + phosphate + H(+). The protein is Acylphosphatase (acyP) of Bacillus velezensis (strain DSM 23117 / BGSC 10A6 / LMG 26770 / FZB42) (Bacillus amyloliquefaciens subsp. plantarum).